Consider the following 337-residue polypeptide: Visual pigment-like receptor peropsin (337 aa).

Topologically, residues 1–26 are extracellular; that stretch reads MLSEASDFNSSGSRSEGSVFSRTEHS. N9 is a glycosylation site (N-linked (GlcNAc...) asparagine). A helical transmembrane segment spans residues 27 to 49; sequence VIAAYLIVAGITSILSNVVVLGI. Residues 50-61 are Cytoplasmic-facing; it reads FIKYKELRTPTN. A helical membrane pass occupies residues 62 to 87; sequence AVIINLAFTDIGVSSIGYPMSAASDL. Residues 88–101 lie on the Extracellular side of the membrane; the sequence is HGSWKFGHAGCQIY. The cysteines at positions 98 and 175 are disulfide-linked. The helical transmembrane segment at 102–121 threads the bilayer; that stretch reads AGLNIFFGMVSIGLLTVVAM. The Cytoplasmic portion of the chain corresponds to 122–140; that stretch reads DRYLTISCPDVGRRMTTNT. Residues 141 to 164 traverse the membrane as a helical segment; sequence YLSMILGAWINGLFWALMPIIGWA. Residues 165 to 188 are Extracellular-facing; the sequence is SYAPDPTGATCTINWRNNDTSFVS. N182 carries N-linked (GlcNAc...) asparagine glycosylation. Residues 189–212 traverse the membrane as a helical segment; it reads YTMMVIVVNFIVPLTVMFYCYYHV. At 213 to 240 the chain is on the cytoplasmic side; the sequence is SRSLRLYAASDCTAHLHRDWADQADVTK. The helical transmembrane segment at 241–264 threads the bilayer; that stretch reads MSVIMILMFLLAWSPYSIVCLWAC. The Extracellular portion of the chain corresponds to 265 to 272; it reads FGNPKKIP. A helical transmembrane segment spans residues 273 to 297; it reads PSMAIIAPLFAKSSTFYNPCIYVAA. At K284 the chain carries N6-(retinylidene)lysine. Topologically, residues 298–337 are cytoplasmic; that stretch reads HKKFRKAMLAMFKCQPHLAVPEPSTLPMDMPQSSLAPVRI.

This sequence belongs to the G-protein coupled receptor 1 family. Opsin subfamily. As to expression, found only in the eye, where it is localized to the retinal pigment epithelium (RPE). In the RPE, it is localized to the microvilli that surround the photoreceptor outer segments.

Its subcellular location is the membrane. In terms of biological role, may play a role in rpe physiology either by detecting light directly or by monitoring the concentration of retinoids or other photoreceptor-derived compounds. This Mus musculus (Mouse) protein is Visual pigment-like receptor peropsin (Rrh).